The following is a 216-amino-acid chain: Peptide deformylase (216 aa).

Positions 134 and 178 each coordinate Fe cation. Residue E179 is part of the active site. Residue H182 participates in Fe cation binding.

The protein belongs to the polypeptide deformylase family. Requires Fe(2+) as cofactor.

The enzyme catalyses N-terminal N-formyl-L-methionyl-[peptide] + H2O = N-terminal L-methionyl-[peptide] + formate. Its function is as follows. Removes the formyl group from the N-terminal Met of newly synthesized proteins. Requires at least a dipeptide for an efficient rate of reaction. N-terminal L-methionine is a prerequisite for activity but the enzyme has broad specificity at other positions. This is Peptide deformylase from Mycoplasma pneumoniae (strain ATCC 29342 / M129 / Subtype 1) (Mycoplasmoides pneumoniae).